The chain runs to 72 residues: Large ribosomal subunit protein bL32 (72 aa).

Belongs to the bacterial ribosomal protein bL32 family.

The protein is Large ribosomal subunit protein bL32 of Dehalococcoides mccartyi (strain ATCC BAA-2266 / KCTC 15142 / 195) (Dehalococcoides ethenogenes (strain 195)).